The following is a 186-amino-acid chain: Elongation factor P (186 aa).

Belongs to the elongation factor P family.

It localises to the cytoplasm. It participates in protein biosynthesis; polypeptide chain elongation. Functionally, involved in peptide bond synthesis. Stimulates efficient translation and peptide-bond synthesis on native or reconstituted 70S ribosomes in vitro. Probably functions indirectly by altering the affinity of the ribosome for aminoacyl-tRNA, thus increasing their reactivity as acceptors for peptidyl transferase. In Shewanella sp. (strain ANA-3), this protein is Elongation factor P.